The sequence spans 128 residues: Sulfurtransferase TusD (128 aa).

Cys-78 acts as the Cysteine persulfide intermediate in catalysis.

Belongs to the DsrE/TusD family. In terms of assembly, heterohexamer, formed by a dimer of trimers. The hexameric TusBCD complex contains 2 copies each of TusB, TusC and TusD. The TusBCD complex interacts with TusE.

The protein resides in the cytoplasm. Its function is as follows. Part of a sulfur-relay system required for 2-thiolation of 5-methylaminomethyl-2-thiouridine (mnm(5)s(2)U) at tRNA wobble positions. Accepts sulfur from TusA and transfers it in turn to TusE. The chain is Sulfurtransferase TusD from Erwinia tasmaniensis (strain DSM 17950 / CFBP 7177 / CIP 109463 / NCPPB 4357 / Et1/99).